The following is a 435-amino-acid chain: Minor fimbrial subunit HifE (435 aa).

The N-terminal stretch at 1–31 (MKTLTTYAKYFTPISKIAFLFCFLMGNIAEA) is a signal peptide.

It belongs to the fimbrial protein family.

The protein localises to the fimbrium. Functionally, may be a minor structural protein required for pilus biogenesis. May be the adhesive component in the pili. The sequence is that of Minor fimbrial subunit HifE (hifE) from Haemophilus influenzae.